The following is a 158-amino-acid chain: Protein Smg homolog (158 aa).

The protein belongs to the Smg family.

In Herminiimonas arsenicoxydans, this protein is Protein Smg homolog.